A 307-amino-acid polypeptide reads, in one-letter code: Ribosomal RNA small subunit methyltransferase H (307 aa).

S-adenosyl-L-methionine contacts are provided by residues 33–35 (GGY), aspartate 51, phenylalanine 82, aspartate 96, and glutamine 103.

It belongs to the methyltransferase superfamily. RsmH family.

It localises to the cytoplasm. The catalysed reaction is cytidine(1402) in 16S rRNA + S-adenosyl-L-methionine = N(4)-methylcytidine(1402) in 16S rRNA + S-adenosyl-L-homocysteine + H(+). Specifically methylates the N4 position of cytidine in position 1402 (C1402) of 16S rRNA. The polypeptide is Ribosomal RNA small subunit methyltransferase H (Rickettsia massiliae (strain Mtu5)).